Here is a 709-residue protein sequence, read N- to C-terminus: FACT complex subunit SSRP1 (709 aa).

A2 carries the N-acetylalanine modification. A Glycyl lysine isopeptide (Lys-Gly) (interchain with G-Cter in SUMO2) cross-link involves residue K90. Phosphothreonine is present on T170. At K233 the chain carries N6-acetyllysine. Residues K296 and K364 each participate in a glycyl lysine isopeptide (Lys-Gly) (interchain with G-Cter in SUMO2) cross-link. K413 is subject to N6-acetyllysine. Phosphoserine is present on S437. Y441 bears the Phosphotyrosine mark. S444 carries the post-translational modification Phosphoserine. The residue at position 452 (Y452) is a Phosphotyrosine. The interval 458–709 is disordered; that stretch reads EEGKIREENA…SEDSASGSDE (252 aa). Acidic residues predominate over residues 470–496; the sequence is SSDDSGEETDESFNPGEEEEDVAEEFD. S471 carries the phosphoserine modification. Residues 497–507 are compositionally biased toward low complexity; sequence SNASASSSSNE. The residue at position 510 (S510) is a Phosphoserine; by CK2. Residues 515-533 are compositionally biased toward basic residues; the sequence is KKRKQLKKAKMAKDRKSRK. 2 stretches are compositionally biased toward basic and acidic residues: residues 534 to 546 and 577 to 624; these read KPVE…DPNA and LSKK…SSKR. K542 is modified (N6-acetyllysine). Positions 547-615 form a DNA-binding region, HMG box; the sequence is PKRPMSAYML…DYEKAMKEYE (69 aa). Positions 625 to 634 are enriched in basic residues; the sequence is DKSKKKKKVK. Positions 643 to 659 are enriched in low complexity; sequence PSRGSSSKSSSRQLSES. S657, S659, S667, S668, S671, S672, and S673 each carry phosphoserine. S688 bears the Phosphoserine; by CK2 mark. Positions 696 to 709 are enriched in polar residues; it reads TPPSSEDSASGSDE.

It belongs to the SSRP1 family. Interacts with MYOG (via C-terminal region). Component of the FACT complex, a stable heterodimer of SSRP1 and SUPT16H. Also a component of a CK2-SPT16-SSRP1 complex which forms following UV irradiation, composed of SSRP1, SUPT16H, CSNK2A1, CSNK2A2 and CSNK2B. Binds to histone H3-H4 tetramers, but not to intact nucleosomes. Identified in a centromere complex containing histones H2A, H2B and H4, and at least CENPA, CENPB, CENPC, CENPT, CENPN, HJURP, SUPT16H, SSRP1 and RSF1. Interacts with isoform gamma of TP63. Interacts with FYTTD1/UIF. Interacts with SRF. Interacts with NEK9. In terms of assembly, (Microbial infection) Interacts with Herpes simplex virus 1 (HHV-1) protein ICP22; this interaction relocalizes the FACT complex to viral genomes in infected cells. Phosphorylated by CK2 following UV but not gamma irradiation. Phosphorylation inhibits its DNA-binding activity. Post-translationally, ubiquitinated. Polyubiquitinated following caspase cleavage resulting in degradation of the N-terminal ubiquitinated part of the cleaved protein. In terms of processing, sumoylated.

The protein resides in the nucleus. Its subcellular location is the nucleolus. It localises to the chromosome. In terms of biological role, component of the FACT complex, a general chromatin factor that acts to reorganize nucleosomes. The FACT complex is involved in multiple processes that require DNA as a template such as mRNA elongation, DNA replication and DNA repair. During transcription elongation the FACT complex acts as a histone chaperone that both destabilizes and restores nucleosomal structure. It facilitates the passage of RNA polymerase II and transcription by promoting the dissociation of one histone H2A-H2B dimer from the nucleosome, then subsequently promotes the reestablishment of the nucleosome following the passage of RNA polymerase II. The FACT complex is probably also involved in phosphorylation of 'Ser-392' of p53/TP53 via its association with CK2 (casein kinase II). Binds specifically to double-stranded DNA and at low levels to DNA modified by the antitumor agent cisplatin. May potentiate cisplatin-induced cell death by blocking replication and repair of modified DNA. Also acts as a transcriptional coactivator for p63/TP63. This chain is FACT complex subunit SSRP1 (SSRP1), found in Homo sapiens (Human).